The sequence spans 451 residues: Protein naked cuticle homolog 2 (451 aa).

Residues 1 to 108 (MGKLQSKHAA…PRGPGGQRLN (108 aa)) are disordered. The N-myristoyl glycine moiety is linked to residue Gly-2. The tract at residues 2-173 (GKLQSKHAAA…GSSKTLRVKL (172 aa)) is targeting to the basolateral cell membrane. Composition is skewed to basic and acidic residues over residues 34–63 (KGAE…REDQ) and 89–99 (DGERAANREGP). The interaction with DVL1, DVL2 and DVL3 stretch occupies residues 113 to 178 (QCDVSVEEDD…LRVKLTVSPE (66 aa)). Residues 119–154 (EEDDRQEWTFTLYDFDNCGKVTREDMSSLMHTIYEV) form the EF-hand domain. Ca(2+) is bound by residues Asp-132, Asp-134, Lys-138, and Asp-143. 2 disordered regions span residues 162-237 (SSGS…PYCV) and 256-408 (YTSR…TVEH). A compositionally biased stretch (basic and acidic residues) spans 180–215 (SSKRKEGPPAGQDREPTRCRMEGELAEEPRVADRRL). The interval 300 to 385 (QVLVEHVVPA…PPPPYGHKRY (86 aa)) is interaction with TGFA. The segment covering 332-351 (KSPKGSGKPPGVPASSKSGK) has biased composition (low complexity).

Belongs to the NKD family. In terms of assembly, interacts with DVL1, DVL2, DVL3 and PPP2R3A. Interacts with RNF25 and TGFA (via cytoplasmic domain). In terms of processing, ubiquitinated, leading to rapid proteasomal degradation. Interaction with TGFA interferes with RNF25 binding and protects against ubiquitination mediated by RNF25. As to expression, expressed in kidney, lung, pancreas and spleen.

Its subcellular location is the cell membrane. The protein resides in the cytoplasm. It localises to the cytoplasmic vesicle. Its function is as follows. Cell autonomous antagonist of the canonical Wnt signaling pathway. May activate a second Wnt signaling pathway that controls planar cell polarity. Required for processing of TGFA and for targeting of TGFA to the basolateral membrane of polarized epithelial cells. This chain is Protein naked cuticle homolog 2 (NKD2), found in Homo sapiens (Human).